The chain runs to 253 residues: Ubiquinone biosynthesis O-methyltransferase (253 aa).

Positions 47, 78, 99, and 141 each coordinate S-adenosyl-L-methionine.

Belongs to the methyltransferase superfamily. UbiG/COQ3 family.

It carries out the reaction a 3-demethylubiquinol + S-adenosyl-L-methionine = a ubiquinol + S-adenosyl-L-homocysteine + H(+). The catalysed reaction is a 3-(all-trans-polyprenyl)benzene-1,2-diol + S-adenosyl-L-methionine = a 2-methoxy-6-(all-trans-polyprenyl)phenol + S-adenosyl-L-homocysteine + H(+). Its pathway is cofactor biosynthesis; ubiquinone biosynthesis. O-methyltransferase that catalyzes the 2 O-methylation steps in the ubiquinone biosynthetic pathway. In Bradyrhizobium diazoefficiens (strain JCM 10833 / BCRC 13528 / IAM 13628 / NBRC 14792 / USDA 110), this protein is Ubiquinone biosynthesis O-methyltransferase.